The chain runs to 522 residues: ATP synthase subunit alpha 2 (522 aa).

176–183 is a binding site for ATP; the sequence is GDRQTGKT.

This sequence belongs to the ATPase alpha/beta chains family. F-type ATPases have 2 components, CF(1) - the catalytic core - and CF(0) - the membrane proton channel. CF(1) has five subunits: alpha(3), beta(3), gamma(1), delta(1), epsilon(1). CF(0) has three main subunits: a(1), b(2) and c(9-12). The alpha and beta chains form an alternating ring which encloses part of the gamma chain. CF(1) is attached to CF(0) by a central stalk formed by the gamma and epsilon chains, while a peripheral stalk is formed by the delta and b chains.

It is found in the cell inner membrane. The catalysed reaction is ATP + H2O + 4 H(+)(in) = ADP + phosphate + 5 H(+)(out). Its function is as follows. Produces ATP from ADP in the presence of a proton gradient across the membrane. The alpha chain is a regulatory subunit. This Syntrophotalea carbinolica (strain DSM 2380 / NBRC 103641 / GraBd1) (Pelobacter carbinolicus) protein is ATP synthase subunit alpha 2.